The chain runs to 264 residues: Flagellar brake protein YcgR 1 (264 aa).

The PilZ domain maps to 132–249; it reads QRREFFRLES…RLAMIERYIA (118 aa).

Belongs to the YcgR family. Monomer. Interacts with the flagellar basal bodies.

The protein localises to the bacterial flagellum basal body. Acts as a flagellar brake, regulating swimming and swarming in a bis-(3'-5') cyclic diguanylic acid (c-di-GMP)-dependent manner. Binds 1 c-di-GMP dimer per subunit. Increasing levels of c-di-GMP lead to decreased motility. The chain is Flagellar brake protein YcgR 1 from Dechloromonas aromatica (strain RCB).